Here is a 255-residue protein sequence, read N- to C-terminus: Protein C activator (255 aa).

The first 18 residues, 1–18 (MVLIRVLANLLILHLSYA), serve as a signal peptide directing secretion. The propeptide occupies 19-24 (QKSSEL). Residues 25–246 (VIGGDECNIN…YTDWIQSIIS (222 aa)) form the Peptidase S1 domain. Disulfide bonds link Cys-31–Cys-162, Cys-49–Cys-65, Cys-97–Cys-253, Cys-141–Cys-207, Cys-173–Cys-186, and Cys-197–Cys-222. Asn-45 is a glycosylation site (N-linked (GlcNAc...) asparagine). His-64 serves as the catalytic Charge relay system. N-linked (GlcNAc...) asparagine glycosylation occurs at Asn-102. The active-site Charge relay system is the Asp-109. N-linked (GlcNAc...) asparagine glycosylation occurs at Asn-153. Ser-201 serves as the catalytic Charge relay system.

This sequence belongs to the peptidase S1 family. Snake venom subfamily. In terms of assembly, monomer. Expressed by the venom gland.

It localises to the secreted. Its function is as follows. Snake venom serine protease that selectively cleaves the heavy chain of protein C (PROC). This activation is thrombomodulin-independent. The polypeptide is Protein C activator (Agkistrodon piscivorus leucostoma (Western cottonmouth)).